The following is a 495-amino-acid chain: MAAAEAQYDLLVIGGGSGGLACSKRAASHGKKVAVCDFVKPSPPGTTWGLGGTCVNVGCIPKKLMHQAALLGEGMTDAESFGWEVAAPKHNWETMVGNVQGHIKSLNFGYRSDLMSNGVKYYNAYATFLDPHTVEAVDKKGKVTKITASEIVICTGGRPRYPDIPGAKELGITSDDVFALKSPPGRTLVVGASYVALECAGFIKGVGYDTTVMMRSIPLRGFDQQMAGLCKTYMQEHGVAFIEGAVPTAVEATPSGAKKVSWKLADGSVGSGEYDTVLFAIGRDVCTSAIGIDKAGVKLSSNGKVPTVNEQTNVPHIYAIGDIIDGEALNPPSATTELTPVAIQAGKLLADRLYAGKSALMDYSMVATTVYTPLEYGAVGLPEEEAIKLHGEDNIEVYHSYFKPLEWTLPHRGDNVCYAKLICLKPEGERVIGLHVCGPNAGEMTQGFAVAIKAGATKAHFDDTVGIHPTVAEEFTLLAATKRSGDSAEKSGCUG.

37–54 contacts FAD; sequence DFVKPSPPGTTWGLGGTC. C54 and C59 are disulfide-bonded. H468 acts as the Proton acceptor in catalysis. The segment at residues 493 to 494 is a cross-link (cysteinyl-selenocysteine (Cys-Sec)); that stretch reads CU. Residue U494 is a non-standard amino acid, selenocysteine.

This sequence belongs to the class-I pyridine nucleotide-disulfide oxidoreductase family. In terms of assembly, homodimer. Requires FAD as cofactor. The N-terminus is blocked.

It carries out the reaction [thioredoxin]-dithiol + NADP(+) = [thioredoxin]-disulfide + NADPH + H(+). Its activity is regulated as follows. Activity was very low in selenium-depleted cells, but increased 4-fold to the same level as in selenium-sufficient cells for 70 hours after the addition of 10 nm selenite. This is Thioredoxin reductase SEP1 (SEP1) from Emiliania huxleyi (Coccolithophore).